The chain runs to 1143 residues: Probable ATP-dependent RNA helicase DHX34 (1143 aa).

Disordered stretches follow at residues 1 to 24 (MPPP…EEEA) and 75 to 94 (TSRK…PALA). Residues 76–85 (SRKEEKDPGQ) are compositionally biased toward basic and acidic residues. The Helicase ATP-binding domain maps to 172–332 (LQTLKEHQVV…FSNAPVVQVP (161 aa)). ATP is bound at residue 185–192 (GDTGCGKS). A DEAH box motif is present at residues 279-282 (DEVH). In terms of domain architecture, Helicase C-terminal spans 368-536 (SIDHKYPPEE…SLVLQMKSMS (169 aa)). The tract at residues 701-955 (QAAQVGDSYS…LRARWESALD (255 aa)) is negatively regulates interaction with UPF1. The disordered stretch occupies residues 724-766 (LKRQHEEGAGRRRKVLRLQEEQDGGSSDEDRAGPAPPGASDGV). S749 and S750 each carry phosphoserine. The interval 810 to 1143 (PQLAVPDAFN…EVLRHRKQHV (334 aa)) is required for phosphorylation of UPF1. Not required for interaction with UPF1. Residues 957–1143 (QLAHQAQQQL…EVLRHRKQHV (187 aa)) form a required for the interaction with SMG1 and subsequent phosphorylation of UPF1 region.

The protein belongs to the DEAD box helicase family. DEAH subfamily. Forms a complex with RUVBL1 and RUVBL2. Part of a complex composed of SMG1, DHX34 and UPF1; within the complex DHX34 acts as a scaffolding protein to facilitate SMG1 phosphorylation of UPF1. Interacts with UPF1, MOV10, EIF4A3, XRN2, SMG6, SMG7, SMG9, UPF3A, UPF3B, CASC3/MLN51, XRN1, DIS3 and DCP1A; the interactions are RNA-independent. Interacts with NCBP1/CPB80; the interaction is RNA-dependent. Interacts (via C-terminus) with SMG1; the interaction is RNA-independent. As to expression, expressed in whole blood, testis and spleen. Also expressed in the brain.

The enzyme catalyses ATP + H2O = ADP + phosphate + H(+). Its function is as follows. Probable ATP-binding RNA helicase required for nonsense-mediated decay (NMD) degradation of mRNA transcripts containing premature stop codons. Promotes the phosphorylation of UPF1 along with its interaction with key NMD pathway proteins UPF2 and EIF4A3. Interaction with the RUVBL1-RUVBL2 complex results in loss of nucleotide binding ability and ATP hydrolysis of the complex. Negatively regulates the nucleotide binding ability and ATP hydrolysis of the RUVBL1-RUVBL2 complex via induction of N-terminus conformation changes of the RUVBL2 subunits. This is Probable ATP-dependent RNA helicase DHX34 from Homo sapiens (Human).